The primary structure comprises 131 residues: Small ribosomal subunit protein uS11 (131 aa).

Belongs to the universal ribosomal protein uS11 family. Part of the 30S ribosomal subunit. Interacts with proteins S7 and S18. Binds to IF-3.

Its function is as follows. Located on the platform of the 30S subunit, it bridges several disparate RNA helices of the 16S rRNA. Forms part of the Shine-Dalgarno cleft in the 70S ribosome. The chain is Small ribosomal subunit protein uS11 from Pelobacter propionicus (strain DSM 2379 / NBRC 103807 / OttBd1).